The sequence spans 63 residues: Large ribosomal subunit protein uL30 (63 aa).

It belongs to the universal ribosomal protein uL30 family. Part of the 50S ribosomal subunit.

The chain is Large ribosomal subunit protein uL30 from Xylella fastidiosa (strain 9a5c).